The sequence spans 1330 residues: Kinectin (1330 aa).

Topologically, residues 1–6 (MEFYES) are cytoplasmic. A helical; Signal-anchor for type II membrane protein membrane pass occupies residues 7-29 (TYFIVLIPSVVITVIFLFFWLFM). Residues 30 to 1330 (KETLYDEVLA…KEKEHYQVLE (1301 aa)) lie on the Lumenal side of the membrane. Disordered regions lie at residues 49 to 81 (PTKT…ESVP) and 108 to 218 (SSSV…KQKA). A phosphoserine mark is found at S75 and S77. Over residues 113–122 (ERKKKEKKHK) the composition is skewed to basic residues. Residues 123–135 (PVLEEQVTKESDV) show a composition bias toward basic and acidic residues. T153 bears the Phosphothreonine mark. At S156 the chain carries Phosphoserine. Residues 161–171 (SKKKPGQKKSK) show a composition bias toward basic residues. 5 N-linked (GlcNAc...) asparagine glycosylation sites follow: N172, N435, N772, N904, and N1055. Residues 172-182 (NGSDDQDKKVE) show a composition bias toward basic and acidic residues. Positions 332 to 1329 (HQLQEKDKLL…TKEKEHYQVL (998 aa)) form a coiled coil. S1085 bears the Phosphoserine mark. N1236 is a glycosylation site (N-linked (GlcNAc...) asparagine). Position 1286 is a phosphoserine (S1286). N1302 carries an N-linked (GlcNAc...) asparagine glycan.

This sequence belongs to the kinectin family. Parallel homodimers formed between the membrane-bound and the cytosolic form, and also between 2 cytosolic forms. Expressed in male brain, heart, kidney, liver, lung, spleen and testis.

Its subcellular location is the endoplasmic reticulum membrane. Its function is as follows. Receptor for kinesin thus involved in kinesin-driven vesicle motility. The protein is Kinectin (KTN1) of Vulpes vulpes (Red fox).